We begin with the raw amino-acid sequence, 145 residues long: Photosystem I reaction center subunit VI-2, chloroplastic (145 aa).

The N-terminal 50 residues, 1–50 (MASFATIAAVQPSAAVKGLGGSSLAGAKLFIKPSRQSFKTKSTRAGAVVA), are a transit peptide targeting the chloroplast. The helical transmembrane segment at 102–118 (LLLKFLILGGGSLLTYV) threads the bilayer. The interval 126-145 (VLPIKRGPQEPPKLGPRGKL) is disordered.

It belongs to the psaH family.

It localises to the plastid. The protein resides in the chloroplast thylakoid membrane. In terms of biological role, possible role could be the docking of the LHC I antenna complex to the core complex. The protein is Photosystem I reaction center subunit VI-2, chloroplastic (PSAH2) of Arabidopsis thaliana (Mouse-ear cress).